The following is a 79-amino-acid chain: Phosphoribosylformylglycinamidine synthase subunit PurS (79 aa).

It belongs to the PurS family. Homodimer. Part of the FGAM synthase complex composed of 1 PurL, 1 PurQ and 2 PurS subunits.

It is found in the cytoplasm. The enzyme catalyses N(2)-formyl-N(1)-(5-phospho-beta-D-ribosyl)glycinamide + L-glutamine + ATP + H2O = 2-formamido-N(1)-(5-O-phospho-beta-D-ribosyl)acetamidine + L-glutamate + ADP + phosphate + H(+). Its pathway is purine metabolism; IMP biosynthesis via de novo pathway; 5-amino-1-(5-phospho-D-ribosyl)imidazole from N(2)-formyl-N(1)-(5-phospho-D-ribosyl)glycinamide: step 1/2. Part of the phosphoribosylformylglycinamidine synthase complex involved in the purines biosynthetic pathway. Catalyzes the ATP-dependent conversion of formylglycinamide ribonucleotide (FGAR) and glutamine to yield formylglycinamidine ribonucleotide (FGAM) and glutamate. The FGAM synthase complex is composed of three subunits. PurQ produces an ammonia molecule by converting glutamine to glutamate. PurL transfers the ammonia molecule to FGAR to form FGAM in an ATP-dependent manner. PurS interacts with PurQ and PurL and is thought to assist in the transfer of the ammonia molecule from PurQ to PurL. In Mycobacterium leprae (strain TN), this protein is Phosphoribosylformylglycinamidine synthase subunit PurS.